The chain runs to 513 residues: Pleiotropic regulator 1 (513 aa).

Methionine 1 carries the post-translational modification N-acetylmethionine. 2 positions are modified to phosphoserine: serine 119 and serine 200. 7 WD repeats span residues 201–240 (GHLG…LKLS), 243–282 (GHIS…VIRH), 285–324 (GHLS…SVHT), 327–366 (GHTN…TRVT), 369–409 (NHKK…QNLS), 410–448 (GHNA…NFQR), and 459–498 (DSES…TEET). Serine 390 carries the phosphoserine modification.

This sequence belongs to the WD repeat PRL1/PRL2 family. As to quaternary structure, identified in the spliceosome C complex. Component of the PRP19-CDC5L splicing complex composed of a core complex comprising a homotetramer of PRPF19, CDC5L, PLRG1 and BCAS2, and at least three less stably associated proteins CTNNBL1, CWC15 and HSPA8. Interacts (via its WD40 repeat domain) directly with CDC5L (via its C-terminal); the interaction is required for mRNA splicing but not for spliceosome assembly. Component of the minor spliceosome, which splices U12-type introns. Within this complex, interacts with CRIPT. Also interacts directly in the complex with BCAS2 and PRPF19. Interacts with USB1.

It localises to the nucleus. Its subcellular location is the nucleus speckle. Involved in pre-mRNA splicing as component of the spliceosome. Component of the PRP19-CDC5L complex that forms an integral part of the spliceosome and is required for activating pre-mRNA splicing. As a component of the minor spliceosome, involved in the splicing of U12-type introns in pre-mRNAs. This is Pleiotropic regulator 1 (PLRG1) from Bos taurus (Bovine).